A 246-amino-acid chain; its full sequence is MTSSLSRPSGRRADELRKVALTRHYTKHAEGSVLVEFGDTKVICTASVAERVPEFLRDRGQGWLTAEYGMLPRATHTRSDREAARGKQTGRTQEIQRLIGRALRAVFDLEALGPRTIHIDCDVIQADGGTRTASITGAFVAAHDAVSKLIAAGKLARSPITDHVAAISVGVYEGVPLLDLDYAEDSRCDTDMNVVMTGAGGFVEVQGTAEGVPFSRAEMNALLDLAQSGIGQLVQLQKDVLGAGNV.

Residues R91 and 129–131 (GTR) each bind phosphate.

This sequence belongs to the RNase PH family. As to quaternary structure, homohexameric ring arranged as a trimer of dimers.

It catalyses the reaction tRNA(n+1) + phosphate = tRNA(n) + a ribonucleoside 5'-diphosphate. In terms of biological role, phosphorolytic 3'-5' exoribonuclease that plays an important role in tRNA 3'-end maturation. Removes nucleotide residues following the 3'-CCA terminus of tRNAs; can also add nucleotides to the ends of RNA molecules by using nucleoside diphosphates as substrates, but this may not be physiologically important. Probably plays a role in initiation of 16S rRNA degradation (leading to ribosome degradation) during starvation. The protein is Ribonuclease PH of Burkholderia ambifaria (strain ATCC BAA-244 / DSM 16087 / CCUG 44356 / LMG 19182 / AMMD) (Burkholderia cepacia (strain AMMD)).